Reading from the N-terminus, the 113-residue chain is Small ribosomal subunit protein uS15 (113 aa).

It belongs to the universal ribosomal protein uS15 family. In terms of assembly, part of the 30S ribosomal subunit. Forms a bridge to the 50S subunit in the 70S ribosome, contacting the 23S rRNA.

Functionally, one of the primary rRNA binding proteins, it binds directly to 16S rRNA where it helps nucleate assembly of the platform of the 30S subunit by binding and bridging several RNA helices of the 16S rRNA. Forms an intersubunit bridge (bridge B4) with the 23S rRNA of the 50S subunit in the ribosome. The polypeptide is Small ribosomal subunit protein uS15 (Haemophilus influenzae (strain PittEE)).